The following is a 247-amino-acid chain: 5'-nucleotidase SurE (247 aa).

Aspartate 8, aspartate 9, serine 39, and asparagine 91 together coordinate a divalent metal cation.

It belongs to the SurE nucleotidase family. Requires a divalent metal cation as cofactor.

The protein localises to the cytoplasm. It catalyses the reaction a ribonucleoside 5'-phosphate + H2O = a ribonucleoside + phosphate. Nucleotidase that shows phosphatase activity on nucleoside 5'-monophosphates. The sequence is that of 5'-nucleotidase SurE from Laribacter hongkongensis (strain HLHK9).